Here is a 346-residue protein sequence, read N- to C-terminus: Methylthioribose-1-phosphate isomerase (346 aa).

Residues 46–48 (RGA), R89, and Q196 each bind substrate. D237 serves as the catalytic Proton donor. Residue 247–248 (NK) participates in substrate binding.

This sequence belongs to the eIF-2B alpha/beta/delta subunits family. MtnA subfamily.

It carries out the reaction 5-(methylsulfanyl)-alpha-D-ribose 1-phosphate = 5-(methylsulfanyl)-D-ribulose 1-phosphate. The protein operates within amino-acid biosynthesis; L-methionine biosynthesis via salvage pathway; L-methionine from S-methyl-5-thio-alpha-D-ribose 1-phosphate: step 1/6. In terms of biological role, catalyzes the interconversion of methylthioribose-1-phosphate (MTR-1-P) into methylthioribulose-1-phosphate (MTRu-1-P). The polypeptide is Methylthioribose-1-phosphate isomerase (Citrifermentans bemidjiense (strain ATCC BAA-1014 / DSM 16622 / JCM 12645 / Bem) (Geobacter bemidjiensis)).